We begin with the raw amino-acid sequence, 316 residues long: Melanocyte-stimulating hormone receptor (316 aa).

Over 1–37 (MPMQGAQRKLLGSLNSTPTATSNLGLAANHTGAPCLE) the chain is Extracellular. N-linked (GlcNAc...) asparagine glycosylation is present at N29. A helical transmembrane segment spans residues 38 to 63 (VSIPDGLFLSLGLVSLVENVLVVAAI). At 64-72 (AKNRNLHSS) the chain is on the cytoplasmic side. A helical membrane pass occupies residues 73 to 93 (MYCFICCLALSDLLVSGSNML). The Extracellular portion of the chain corresponds to 94–118 (ETAVILLLETGALATRTSVVQQLHN). Residues 119–140 (TINVLTCSSMLCSLCFLGAIAV) form a helical membrane-spanning segment. At 141–163 (DRYISIFYALRYHSIMTLPRAQR) the chain is on the cytoplasmic side. The helical transmembrane segment at 164–183 (AIAAIWVASVLSSTLFITYY) threads the bilayer. The Extracellular segment spans residues 184–191 (DHAAVLLC). Residues 192–211 (LVVFFLAMLVLMAVLYVHML) traverse the membrane as a helical segment. Residues 212 to 240 (ARACQHAHGIIRLHKRQTPAHQAFGLRGA) lie on the Cytoplasmic side of the membrane. Residues 241-266 (ATLTILLGIFFLCWGPFFLHLTLVVF) traverse the membrane as a helical segment. Topologically, residues 267–279 (CPQHLTCSCIFKN) are extracellular. A helical membrane pass occupies residues 280–300 (FKVFLTLIICNTIIDPLIYAF). Over 301–316 (RSQELRRTLKEVLCSW) the chain is Cytoplasmic. The S-palmitoyl cysteine moiety is linked to residue C314.

Belongs to the G-protein coupled receptor 1 family. As to quaternary structure, interacts with MGRN1, but does not undergo MGRN1-mediated ubiquitination; this interaction competes with GNAS-binding and thus inhibits agonist-induced cAMP production. Interacts with OPN3; the interaction results in a decrease in MC1R-mediated cAMP signaling and ultimately a decrease in melanin production in melanocytes.

The protein resides in the cell membrane. Receptor for MSH (alpha, beta and gamma) and ACTH. The activity of this receptor is mediated by G proteins which activate adenylate cyclase. Mediates melanogenesis, the production of eumelanin (black/brown) and phaeomelanin (red/yellow), via regulation of cAMP signaling in melanocytes. In Saguinus geoffroyi (Geoffroy's tamarin), this protein is Melanocyte-stimulating hormone receptor (MC1R).